We begin with the raw amino-acid sequence, 237 residues long: Demethylmenaquinone methyltransferase (237 aa).

Residues Thr-58, Asp-79, and 106–107 (NA) each bind S-adenosyl-L-methionine.

This sequence belongs to the class I-like SAM-binding methyltransferase superfamily. MenG/UbiE family.

It catalyses the reaction a 2-demethylmenaquinol + S-adenosyl-L-methionine = a menaquinol + S-adenosyl-L-homocysteine + H(+). It functions in the pathway quinol/quinone metabolism; menaquinone biosynthesis; menaquinol from 1,4-dihydroxy-2-naphthoate: step 2/2. Methyltransferase required for the conversion of demethylmenaquinol (DMKH2) to menaquinol (MKH2). The protein is Demethylmenaquinone methyltransferase of Listeria innocua serovar 6a (strain ATCC BAA-680 / CLIP 11262).